The chain runs to 970 residues: uncharacterized protein (970 aa).

A helical transmembrane segment spans residues Trp11 to Phe31. The disordered stretch occupies residues Ala366–Ile387. Over residues Ser367 to Ile387 the composition is skewed to low complexity. A run of 11 helical transmembrane segments spans residues Phe515–Leu535, Tyr537–Val557, Ile558–Ile578, Phe614–Leu634, Leu645–Ile665, Phe726–Val746, Ser762–Ile782, Cys789–Leu809, Ile816–Ala836, Ile877–Ile897, and Leu903–Pro923.

Its subcellular location is the cell membrane. This is an uncharacterized protein from Mycoplasma genitalium (strain ATCC 33530 / DSM 19775 / NCTC 10195 / G37) (Mycoplasmoides genitalium).